The primary structure comprises 502 residues: Glycerol kinase (502 aa).

Thr14 is a binding site for ADP. ATP contacts are provided by Thr14, Thr15, and Ser16. Position 14 (Thr14) interacts with sn-glycerol 3-phosphate. Arg18 contacts ADP. Residues Arg84, Glu85, Tyr136, and Asp246 each contribute to the sn-glycerol 3-phosphate site. Glycerol-binding residues include Arg84, Glu85, Tyr136, Asp246, and Gln247. Residues Thr268 and Gly311 each coordinate ADP. Thr268, Gly311, Gln315, and Gly412 together coordinate ATP. ADP contacts are provided by Gly412 and Asn416.

Belongs to the FGGY kinase family. Homotetramer and homodimer (in equilibrium). Heterodimer with EIIA-Glc. Binds 1 zinc ion per glycerol kinase EIIA-Glc dimer. The zinc ion is important for dimerization.

The catalysed reaction is glycerol + ATP = sn-glycerol 3-phosphate + ADP + H(+). The protein operates within polyol metabolism; glycerol degradation via glycerol kinase pathway; sn-glycerol 3-phosphate from glycerol: step 1/1. Its activity is regulated as follows. Activity of this regulatory enzyme is affected by several metabolites. Allosterically and non-competitively inhibited by fructose 1,6-bisphosphate (FBP) and unphosphorylated phosphocarrier protein EIIA-Glc (III-Glc), an integral component of the bacterial phosphotransferase (PTS) system. Key enzyme in the regulation of glycerol uptake and metabolism. Catalyzes the phosphorylation of glycerol to yield sn-glycerol 3-phosphate. The polypeptide is Glycerol kinase (Citrobacter koseri (strain ATCC BAA-895 / CDC 4225-83 / SGSC4696)).